A 164-amino-acid polypeptide reads, in one-letter code: Disulfide bond formation protein B (164 aa).

Topologically, residues 1–4 are cytoplasmic; that stretch reads MRII. Residues 5 to 21 traverse the membrane as a helical segment; sequence FLLIALICAGLVSYALY. Topologically, residues 22–39 are periplasmic; it reads LQLADGLLPCPLCIFQRM. Cys-31 and Cys-34 form a disulfide bridge. Residues 40 to 56 form a helical membrane-spanning segment; the sequence is AYWLVGITALFAFIHHP. The Cytoplasmic portion of the chain corresponds to 57–62; it reads QRLGRR. Residues 63–80 form a helical membrane-spanning segment; the sequence is IYCGLIILFSLAGAIVAG. The Periplasmic segment spans residues 81–136; the sequence is RQAWLVRFPEAFECGISPEEAFLNELPLARWWPDMFEANGDCTDGTWQFLSLTIPD. An intrachain disulfide couples Cys-94 to Cys-122. The helical transmembrane segment at 137 to 155 threads the bilayer; the sequence is WSLLIFLAFSLIAGLLWRS. At 156 to 164 the chain is on the cytoplasmic side; the sequence is RSISSSNLK.

Belongs to the DsbB family.

Its subcellular location is the cell inner membrane. Functionally, required for disulfide bond formation in some periplasmic proteins. Acts by oxidizing the DsbA protein. This is Disulfide bond formation protein B from Nitrosomonas europaea (strain ATCC 19718 / CIP 103999 / KCTC 2705 / NBRC 14298).